A 757-amino-acid chain; its full sequence is NAD(P)H-quinone oxidoreductase subunit 5, chloroplastic (757 aa).

17 helical membrane passes run 9-29, 40-60, 89-109, 122-139, 147-167, 185-205, 219-239, 258-278, 280-300, 327-347, 354-374, 396-416, 425-445, 544-564, 607-627, 692-712, and 718-738; these read WIIP…LLLV, WAFP…DLSV, IDPL…MVLI, LRFF…LGLV, IYIF…FWFT, GDFG…SFEF, NGVN…GAVA, TPIS…FLVA, LLPL…IGVI, LGYI…FHLI, ALLF…VGYS, MTFL…CFWS, WLYS…TAFY, LLPL…GIPF, SIAY…YLFF, GIMN…KYLG, and SYLF…IFFF.

This sequence belongs to the complex I subunit 5 family. In terms of assembly, NDH is composed of at least 16 different subunits, 5 of which are encoded in the nucleus.

It localises to the plastid. The protein localises to the chloroplast thylakoid membrane. It catalyses the reaction a plastoquinone + NADH + (n+1) H(+)(in) = a plastoquinol + NAD(+) + n H(+)(out). The enzyme catalyses a plastoquinone + NADPH + (n+1) H(+)(in) = a plastoquinol + NADP(+) + n H(+)(out). NDH shuttles electrons from NAD(P)H:plastoquinone, via FMN and iron-sulfur (Fe-S) centers, to quinones in the photosynthetic chain and possibly in a chloroplast respiratory chain. The immediate electron acceptor for the enzyme in this species is believed to be plastoquinone. Couples the redox reaction to proton translocation, and thus conserves the redox energy in a proton gradient. This chain is NAD(P)H-quinone oxidoreductase subunit 5, chloroplastic (ndhF), found in Drimys granadensis.